The primary structure comprises 334 residues: Photosystem II assembly protein Ycf48 (334 aa).

The N-terminal stretch at 1-22 is a signal peptide; it reads MAKMLKLWRLVLLAAFSLLLMA.

The protein belongs to the Ycf48 family. As to quaternary structure, part of early PSII assembly complexes which includes D1 (psbA) and PsbI; not found in mature PSII. Binds to the lumenal side of PSII complexes. Interacts with YidC.

It is found in the cellular thylakoid lumen. Its function is as follows. A factor required for optimal assembly of photosystem II (PSII), acting in the early stages of PSII assembly. Also plays a role in replacement of photodamaged D1 (psbA). Assists YidC in synthesis of chlorophyll-binding proteins. In Synechococcus sp. (strain JA-3-3Ab) (Cyanobacteria bacterium Yellowstone A-Prime), this protein is Photosystem II assembly protein Ycf48.